Consider the following 426-residue polypeptide: Serine--tRNA ligase (426 aa).

L-serine is bound at residue 231-233 (TAE). 262 to 264 (RSE) provides a ligand contact to ATP. Glu-285 provides a ligand contact to L-serine. 349–352 (EISS) serves as a coordination point for ATP. Ser-385 provides a ligand contact to L-serine.

The protein belongs to the class-II aminoacyl-tRNA synthetase family. Type-1 seryl-tRNA synthetase subfamily. As to quaternary structure, homodimer. The tRNA molecule binds across the dimer.

The protein resides in the cytoplasm. The enzyme catalyses tRNA(Ser) + L-serine + ATP = L-seryl-tRNA(Ser) + AMP + diphosphate + H(+). It carries out the reaction tRNA(Sec) + L-serine + ATP = L-seryl-tRNA(Sec) + AMP + diphosphate + H(+). Its pathway is aminoacyl-tRNA biosynthesis; selenocysteinyl-tRNA(Sec) biosynthesis; L-seryl-tRNA(Sec) from L-serine and tRNA(Sec): step 1/1. Catalyzes the attachment of serine to tRNA(Ser). Is also able to aminoacylate tRNA(Sec) with serine, to form the misacylated tRNA L-seryl-tRNA(Sec), which will be further converted into selenocysteinyl-tRNA(Sec). The polypeptide is Serine--tRNA ligase (Brevibacillus brevis (strain 47 / JCM 6285 / NBRC 100599)).